A 360-amino-acid polypeptide reads, in one-letter code: Lipid-A-disaccharide synthase (360 aa).

It belongs to the LpxB family.

It catalyses the reaction a lipid X + a UDP-2-N,3-O-bis[(3R)-3-hydroxyacyl]-alpha-D-glucosamine = a lipid A disaccharide + UDP + H(+). The protein operates within bacterial outer membrane biogenesis; LPS lipid A biosynthesis. Its function is as follows. Condensation of UDP-2,3-diacylglucosamine and 2,3-diacylglucosamine-1-phosphate to form lipid A disaccharide, a precursor of lipid A, a phosphorylated glycolipid that anchors the lipopolysaccharide to the outer membrane of the cell. This Helicobacter pylori (strain Shi470) protein is Lipid-A-disaccharide synthase.